The chain runs to 3032 residues: DmX-like protein 2 (3032 aa).

3 WD repeats span residues 108–145, 167–207, and 230–278; these read FLSS…ILEE, KTSV…KSSI, and AHPR…EDCL. A Phosphoserine modification is found at Ser-326. The segment at 418 to 486 is disordered; it reads QLDHESDDAD…HPRPSISMPL (69 aa). Residues 422-434 are compositionally biased toward acidic residues; that stretch reads ESDDADREDEERS. Positions 435 to 474 are enriched in basic and acidic residues; the sequence is QDERERGLRMKLDHELSLDRESEAGTGSSEHEDGEREGSP. Ser-473 carries the phosphoserine modification. One copy of the WD 4 repeat lies at 492 to 532; it reads DRKIETLLTEWNKNPDMLFTIHPVDGTFLVWHVKYLDEYNP. Positions 577–598 are disordered; the sequence is PSQQEMMSVDSPHGSQLHSPSH. Residue Ser-587 is modified to Phosphoserine. A compositionally biased stretch (polar residues) spans 589 to 598; the sequence is HGSQLHSPSH. WD repeat units follow at residues 594–633, 750–802, and 879–921; these read HSPS…KSAF, LHTS…RKLL, and QPSQ…VQAC. The interval 937–958 is disordered; sequence VPGQKNLDSSPETSSSMSSVPH. 2 positions are modified to phosphoserine: Ser-945 and Ser-946. Residues 945-958 show a composition bias toward low complexity; that stretch reads SSPETSSSMSSVPH. Residues 1001 to 1038 form a WD 8 repeat; that stretch reads LSSSSIYPVCLAPYLVVTTCSDNKVRFWKCCMETNSLG. Phosphoserine occurs at positions 1141, 1144, and 1152. 2 WD repeats span residues 1164–1205 and 1245–1285; these read PNIK…VSDQ and GTPS…GNVD. Ser-1288 and Ser-1399 each carry phosphoserine. Thr-1416 carries the post-translational modification Phosphothreonine. The disordered stretch occupies residues 1443–1464; it reads RISEDSTKKPQSYEDHIESQSE. A compositionally biased stretch (basic and acidic residues) spans 1444 to 1461; the sequence is ISEDSTKKPQSYEDHIES. Ser-1856 is modified (phosphoserine). Residues 1922 to 1953 are disordered; that stretch reads QLDSVSGRMENGPSESKPVSRSDGGSGADWSA. Phosphothreonine is present on Thr-2017. The stretch at 2117 to 2146 forms a coiled coil; the sequence is GSYERHQIERRRLQAKREHAERRKLWLQKN. Ser-2394 and Ser-2636 each carry phosphoserine. Low complexity predominate over residues 2722–2732; that stretch reads QPGAASHSSSQ. Positions 2722-2744 are disordered; sequence QPGAASHSSSQPHPPPSLPWLGS. 6 WD repeats span residues 2757–2796, 2800–2839, 2846–2888, 2894–2933, 2936–2975, and 2988–3026; these read RNLH…QLVC, AGNA…SNPK, CHSK…GNSL, CHDH…LIHT, AHDS…LIHS, and NIGA…NIPN.

In terms of assembly, interacts with MADD and RAB3GAP. As to expression, expressed in the brain and pituitary gland. Detected in the hippocampus, dentate gyrus, hypothalamus, pyriform cortex and the granular and molecular layers of the cerebellum of adult animals. In the hypothalamus, expression is observed in the arcuate nucleus, the ME, the organum vasculosum of the lamina terminalis, and the subfornical organ, the subcommissural organ, and the suprachiasmatic nucleus. Both tanycytes and hypothalamic neurosecretory neurons express the protein. Expressed in the inner and outer hair cells as well as in the spiral ganglion neurons. Expressed in insulin-secreting cells of the islets of Langerhans in the pancreas.

It localises to the cytoplasmic vesicle. The protein localises to the secretory vesicle. The protein resides in the synaptic vesicle membrane. Its subcellular location is the neuronal dense core vesicle. May serve as a scaffold protein for MADD and RAB3GA on synaptic vesicles of neuronal and endocrine homeostatic processes. Plays a role in the brain as a key controller of neuronal and endocrine homeostatic processes. This Mus musculus (Mouse) protein is DmX-like protein 2 (Dmxl2).